The following is a 209-amino-acid chain: Thymidine kinase (209 aa).

ATP-binding positions include 9–16 and 88–91; these read SAMNAGKT and DEAQ. The Proton acceptor role is filled by glutamate 89.

It belongs to the thymidine kinase family. In terms of assembly, homotetramer.

It localises to the cytoplasm. It catalyses the reaction thymidine + ATP = dTMP + ADP + H(+). In Xanthomonas axonopodis pv. citri (strain 306), this protein is Thymidine kinase.